We begin with the raw amino-acid sequence, 907 residues long: Schlafen family member 13 (907 aa).

The tract at residues 1-353 (MEIHPSLVVE…WVRMMVDIGP (353 aa)) is n'-domain region. Active-site residues include glutamate 205 and glutamate 210. The Zn(2+) site is built by histidine 281, cysteine 283, and cysteine 318. Residue 604-611 (GMPGSGKT) coordinates ATP.

The protein belongs to the Schlafen family. Subgroup III subfamily. Requires Mg(2+) as cofactor.

It localises to the cytoplasm. Its function is as follows. Endoribonuclease that cleaves tRNAs and rRNAs. Cleaves tRNAs 11 nucleotides from the 3'-terminus at the acceptor stem. Does not act on tRNA(Sec). This is Schlafen family member 13 from Rattus norvegicus (Rat).